Consider the following 266-residue polypeptide: Zinc transporter ZupT (266 aa).

Transmembrane regions (helical) follow at residues 8 to 28 (LLLT…ALVV), 35 to 55 (FLTL…FVEL), 70 to 90 (QAAA…IWAI), 123 to 143 (GLFT…AVFF), 152 to 172 (GIVI…AIAV), 185 to 205 (FTYS…GFAI), 209 to 229 (WLSP…MVYI), and 246 to 266 (LAIS…LLLA). Residues asparagine 134 and glutamate 137 each coordinate Fe(2+). Residues glutamate 137 and histidine 162 each coordinate Zn(2+). Asparagine 163, glutamate 166, and glutamate 195 together coordinate Fe(2+). Glutamate 166 contacts Zn(2+).

The protein belongs to the ZIP transporter (TC 2.A.5) family. ZupT subfamily.

It is found in the cell membrane. The enzyme catalyses Zn(2+)(in) = Zn(2+)(out). In terms of biological role, mediates zinc uptake. May also transport other divalent cations. In Chlorobium phaeovibrioides (strain DSM 265 / 1930) (Prosthecochloris vibrioformis (strain DSM 265)), this protein is Zinc transporter ZupT.